Here is an 88-residue protein sequence, read N- to C-terminus: Translation initiation factor IF-1 2 (88 aa).

Residues 1-72 (MAKEELIEMQ…TKGRITFRHL (72 aa)) enclose the S1-like domain.

Belongs to the IF-1 family. Component of the 30S ribosomal translation pre-initiation complex which assembles on the 30S ribosome in the order IF-2 and IF-3, IF-1 and N-formylmethionyl-tRNA(fMet); mRNA recruitment can occur at any time during PIC assembly.

The protein resides in the cytoplasm. Its function is as follows. One of the essential components for the initiation of protein synthesis. Stabilizes the binding of IF-2 and IF-3 on the 30S subunit to which N-formylmethionyl-tRNA(fMet) subsequently binds. Helps modulate mRNA selection, yielding the 30S pre-initiation complex (PIC). Upon addition of the 50S ribosomal subunit IF-1, IF-2 and IF-3 are released leaving the mature 70S translation initiation complex. The protein is Translation initiation factor IF-1 2 of Acidovorax sp. (strain JS42).